Consider the following 26-residue polypeptide: Conotoxin reg6(gamma) (26 aa).

Residues 1–12 (RVLEPGXEDPDV) show a composition bias toward acidic residues. Residues 1–26 (RVLEPGXEDPDVGEPAGEYEHHLLEX) are disordered. 4-carboxyglutamate is present on Glu4. Position 5 is a 4-hydroxyproline (Pro5). The residue at position 8 (Glu8) is a 4-carboxyglutamate. Pro10 is modified (4-hydroxyproline). Glu14 is modified (4-carboxyglutamate). Pro15 bears the 4-hydroxyproline mark. Residues Glu18, Glu20, and Glu25 each carry the 4-carboxyglutamate modification.

In terms of tissue distribution, expressed by the venom duct.

It localises to the secreted. The protein is Conotoxin reg6(gamma) of Conus regius (Crown cone).